Reading from the N-terminus, the 653-residue chain is Laccase ustL (653 aa).

The signal sequence occupies residues M1–A20. Plastocyanin-like domains are found at residues W31–R143 and V173–V362. N-linked (GlcNAc...) asparagine glycans are attached at residues N74, N220, N235, N255, N277, N405, N463, and N479. Residues N463–G594 form the Plastocyanin-like 3 domain. Cu cation is bound by residues H501, H504, H506, H576, C577, H578, and H582. A glycan (N-linked (GlcNAc...) asparagine) is linked at N623.

This sequence belongs to the multicopper oxidase family.

The catalysed reaction is 4 norrubrofusarin + O2 = 2 ustilaginoidin A + 2 H2O. The protein operates within secondary metabolite biosynthesis. In terms of biological role, laccase; part of the gene cluster that mediates the biosynthesis of ustilaginoidins, dimeric gamma-naphthopyrones isolated from different fungal species. The first step in the biosynthesis of ustilaginoidins is the production of gamma-naphthopyrone precursor YWA1 by the non-reducing polyketide synthase ustP, via condensation of one acetyl-CoA starter unit with 6 malonyl-CoA units. YWA1 is then probably substrate of the ustZ to yield norrubrofusarin via a dehydration reaction. A key enzyme in the biosynthetic pathway is the laccase ustL, which catalyzes the oxidative dimerization of norrubrofusarin to ustilaginoidin A. It can produce the M- and P-atropisomers in varying amounts, depending on the reaction conditions. For the biosynthesis of 3-methylustilaginoid in derivatives such as chaetochromin A, a methylated derivative of YWA1 is required. The C-methylation is considered to be catalyzed by ustM, the phosphopantetheine attachment site of which indicates that it acts on the growing polyketide chain before release of the product. For the biosynthesis of chaetochromin A, it is assumed that saturation of the D2 double bond takes place before dimerization, and is probably catalyzed by an external reductase because no candidate gene was identified within the cluster. The chain is Laccase ustL from Ustilaginoidea virens (Rice false smut fungus).